The sequence spans 150 residues: MKVAITNRQKRHPIGTRRLRKVAETILGALGYPDSELSVVITGDLGIRRVNRDYLGKDRPTNVISFAMGEGDFGDLNPDVLGDVIISADTAAREAEEAGIAFWSRLCFLLLHGTLHITGYDHERSGEAEARRMEAKEREIFALLENGGLV.

Residues H112, H116, and H122 each coordinate Zn(2+).

This sequence belongs to the endoribonuclease YbeY family. It depends on Zn(2+) as a cofactor.

The protein resides in the cytoplasm. Its function is as follows. Single strand-specific metallo-endoribonuclease involved in late-stage 70S ribosome quality control and in maturation of the 3' terminus of the 16S rRNA. The protein is Endoribonuclease YbeY of Geobacter sulfurreducens (strain ATCC 51573 / DSM 12127 / PCA).